Consider the following 265-residue polypeptide: MEVLKRENPLIHMITNYVTVNDLAQVTINYGGLPLMATHHDELKEITKMANGLLVNIGTLEPYQMESSMISMKIAKEKGIPSVLDPVGVQASKLRRDFAKKIILEGEPSLIKGNLAEIKTLIGETSNSIGIDSFEDSLSENTKNKIKEYARERNLVVVVSGVVDFITNGEESASVKNGTYKMSKITGTGCMLGALLTLALSFYDHKDLRFKEVVKAVSTWGICGELAEERLREKEGLMTFKHNLLDELSIINDETIKEREKVIYE.

Residue M36 coordinates substrate. ATP contacts are provided by K112 and S160. A substrate-binding site is contributed by G187.

Belongs to the Thz kinase family. The cofactor is Mg(2+).

The catalysed reaction is 5-(2-hydroxyethyl)-4-methylthiazole + ATP = 4-methyl-5-(2-phosphooxyethyl)-thiazole + ADP + H(+). The protein operates within cofactor biosynthesis; thiamine diphosphate biosynthesis; 4-methyl-5-(2-phosphoethyl)-thiazole from 5-(2-hydroxyethyl)-4-methylthiazole: step 1/1. Its function is as follows. Catalyzes the phosphorylation of the hydroxyl group of 4-methyl-5-beta-hydroxyethylthiazole (THZ). The protein is Hydroxyethylthiazole kinase of Clostridium perfringens (strain 13 / Type A).